Here is a 338-residue protein sequence, read N- to C-terminus: Glycerol-3-phosphate dehydrogenase [NAD(P)+] (338 aa).

The NADPH site is built by serine 13, tryptophan 14, and lysine 108. Sn-glycerol 3-phosphate-binding residues include lysine 108, glycine 139, and serine 141. Alanine 143 serves as a coordination point for NADPH. Positions 194, 247, 257, 258, and 259 each coordinate sn-glycerol 3-phosphate. Lysine 194 acts as the Proton acceptor in catalysis. Arginine 258 provides a ligand contact to NADPH. NADPH-binding residues include valine 282 and glutamate 284.

The protein belongs to the NAD-dependent glycerol-3-phosphate dehydrogenase family.

The protein localises to the cytoplasm. It carries out the reaction sn-glycerol 3-phosphate + NAD(+) = dihydroxyacetone phosphate + NADH + H(+). It catalyses the reaction sn-glycerol 3-phosphate + NADP(+) = dihydroxyacetone phosphate + NADPH + H(+). It functions in the pathway membrane lipid metabolism; glycerophospholipid metabolism. Functionally, catalyzes the reduction of the glycolytic intermediate dihydroxyacetone phosphate (DHAP) to sn-glycerol 3-phosphate (G3P), the key precursor for phospholipid synthesis. This is Glycerol-3-phosphate dehydrogenase [NAD(P)+] from Listeria monocytogenes serotype 4b (strain CLIP80459).